A 145-amino-acid chain; its full sequence is Large ribosomal subunit protein uL13 (145 aa).

Belongs to the universal ribosomal protein uL13 family. Part of the 50S ribosomal subunit.

This protein is one of the early assembly proteins of the 50S ribosomal subunit, although it is not seen to bind rRNA by itself. It is important during the early stages of 50S assembly. The sequence is that of Large ribosomal subunit protein uL13 from Bacillus cereus (strain G9842).